An 872-amino-acid polypeptide reads, in one-letter code: DNA mismatch repair protein MutS (872 aa).

Residue 632 to 639 (GPNMGGKS) coordinates ATP.

Belongs to the DNA mismatch repair MutS family.

This protein is involved in the repair of mismatches in DNA. It is possible that it carries out the mismatch recognition step. This protein has a weak ATPase activity. The protein is DNA mismatch repair protein MutS of Colwellia psychrerythraea (strain 34H / ATCC BAA-681) (Vibrio psychroerythus).